The sequence spans 224 residues: tRNA (guanine-N(7)-)-methyltransferase (224 aa).

Positions 45, 70, 97, and 119 each coordinate S-adenosyl-L-methionine. Aspartate 119 is a catalytic residue. Substrate contacts are provided by residues lysine 123, aspartate 155, and 199–202 (TEYE).

This sequence belongs to the class I-like SAM-binding methyltransferase superfamily. TrmB family.

The enzyme catalyses guanosine(46) in tRNA + S-adenosyl-L-methionine = N(7)-methylguanosine(46) in tRNA + S-adenosyl-L-homocysteine. It participates in tRNA modification; N(7)-methylguanine-tRNA biosynthesis. Functionally, catalyzes the formation of N(7)-methylguanine at position 46 (m7G46) in tRNA. The chain is tRNA (guanine-N(7)-)-methyltransferase from Ureaplasma parvum serovar 3 (strain ATCC 27815 / 27 / NCTC 11736).